Consider the following 494-residue polypeptide: Alpha-amylase-related protein (494 aa).

The N-terminal stretch at 1-20 is a signal peptide; that stretch reads MIKFALALTLCLAGASLSLA. Q21 bears the Pyrrolidone carboxylic acid mark. A disulfide bridge links C48 with C104. 3 residues coordinate Ca(2+): N118, Q169, and D178. Residues C157 and C171 are joined by a disulfide bond. Residue R206 participates in chloride binding. The active-site Nucleophile is D208. H212 lines the Ca(2+) pocket. Residue E245 is the Proton donor of the active site. Residues N308 and R343 each coordinate chloride. 3 disulfides stabilise this stretch: C376/C382, C418/C441, and C448/C460.

Belongs to the glycosyl hydrolase 13 family. In terms of assembly, monomer. Ca(2+) is required as a cofactor. It depends on chloride as a cofactor.

The protein localises to the secreted. It catalyses the reaction Endohydrolysis of (1-&gt;4)-alpha-D-glucosidic linkages in polysaccharides containing three or more (1-&gt;4)-alpha-linked D-glucose units.. This chain is Alpha-amylase-related protein (Amyrel), found in Drosophila serrata (Fruit fly).